The chain runs to 213 residues: ATP phosphoribosyltransferase (213 aa).

This sequence belongs to the ATP phosphoribosyltransferase family. Short subfamily. In terms of assembly, heteromultimer composed of HisG and HisZ subunits.

The protein resides in the cytoplasm. It catalyses the reaction 1-(5-phospho-beta-D-ribosyl)-ATP + diphosphate = 5-phospho-alpha-D-ribose 1-diphosphate + ATP. It functions in the pathway amino-acid biosynthesis; L-histidine biosynthesis; L-histidine from 5-phospho-alpha-D-ribose 1-diphosphate: step 1/9. In terms of biological role, catalyzes the condensation of ATP and 5-phosphoribose 1-diphosphate to form N'-(5'-phosphoribosyl)-ATP (PR-ATP). Has a crucial role in the pathway because the rate of histidine biosynthesis seems to be controlled primarily by regulation of HisG enzymatic activity. This Bacillus velezensis (strain DSM 23117 / BGSC 10A6 / LMG 26770 / FZB42) (Bacillus amyloliquefaciens subsp. plantarum) protein is ATP phosphoribosyltransferase.